Reading from the N-terminus, the 530-residue chain is MGDDSLYLGGEWQFNHFSKLTSSRPDAAFAEIQRTSLPEKSPLSSETRVDLCDDLAPVARQLAPREKLPLSSRRPAAVGAGLQNMGNTCYENASLQCLTYTLPLANYMLSREHSQTCQRPKCCMLCTMQAHITWALHSPGHVIQPSQALAAGFHRGKQEDVHEFLMFTVDAMKKACLPGHKQVDHHSKDTTLIHQIFGGCWRSQIKCLHCHGISDTFDPYLDIALDIQAAQSVKQALEQLVKPEELNGENAYHCGLCLQRAPASNTLTLHTSAKVLILVLKRFSDVAGNKLAKNVQYPECLDMQPYMSQQNTGPLVYVLYAVLVHAGWSCHDGYYFSYVKAQEGQWYKMDDAEVTVCSITSVLSQQAYVLFYIQKSEWERHSESVSRGREPRALGAEDTDRPATQGELKRDHPCLQVPELDEHLVERATEESTLDHWKFPQEQNKMKPEFNVRKVEGTLPPNVLVIHQSKYKCGMKNHHPEQQSSLLNLSSMNSTDQESMNTGTLASLQGRTRRSKGKNKHSKRSLLVCQ.

The USP domain occupies 80–375 (AGLQNMGNTC…QAYVLFYIQK (296 aa)). Residues 382 to 392 (SESVSRGREPR) show a composition bias toward basic and acidic residues. Disordered stretches follow at residues 382-410 (SESVSRGREPRALGAEDTDRPATQGELKR) and 493-530 (NSTDQESMNTGTLASLQGRTRRSKGKNKHSKRSLLVCQ). Polar residues predominate over residues 495–510 (TDQESMNTGTLASLQG). A compositionally biased stretch (basic residues) spans 511 to 524 (RTRRSKGKNKHSKR).

The protein belongs to the peptidase C19 family. USP17 subfamily.

The protein resides in the nucleus. Its subcellular location is the endoplasmic reticulum. This chain is Inactive ubiquitin carboxyl-terminal hydrolase 17-like protein 4 (USP17L4), found in Homo sapiens (Human).